The primary structure comprises 102 residues: NADH-quinone oxidoreductase subunit K (102 aa).

3 consecutive transmembrane segments (helical) span residues 5–25 (ITHY…GIFL), 31–51 (IIIL…FVAF), and 66–86 (FILT…VVFF).

It belongs to the complex I subunit 4L family. As to quaternary structure, NDH-1 is composed of 14 different subunits. Subunits NuoA, H, J, K, L, M, N constitute the membrane sector of the complex.

The protein resides in the cell inner membrane. It carries out the reaction a quinone + NADH + 5 H(+)(in) = a quinol + NAD(+) + 4 H(+)(out). In terms of biological role, NDH-1 shuttles electrons from NADH, via FMN and iron-sulfur (Fe-S) centers, to quinones in the respiratory chain. The immediate electron acceptor for the enzyme in this species is believed to be ubiquinone. Couples the redox reaction to proton translocation (for every two electrons transferred, four hydrogen ions are translocated across the cytoplasmic membrane), and thus conserves the redox energy in a proton gradient. This Bartonella quintana (strain Toulouse) (Rochalimaea quintana) protein is NADH-quinone oxidoreductase subunit K.